Reading from the N-terminus, the 194-residue chain is Peptidyl-tRNA hydrolase (194 aa).

Residue Y17 coordinates tRNA. Catalysis depends on H22, which acts as the Proton acceptor. TRNA-binding residues include Y68, N70, and N116.

This sequence belongs to the PTH family. In terms of assembly, monomer.

The protein resides in the cytoplasm. The enzyme catalyses an N-acyl-L-alpha-aminoacyl-tRNA + H2O = an N-acyl-L-amino acid + a tRNA + H(+). In terms of biological role, hydrolyzes ribosome-free peptidyl-tRNAs (with 1 or more amino acids incorporated), which drop off the ribosome during protein synthesis, or as a result of ribosome stalling. Catalyzes the release of premature peptidyl moieties from peptidyl-tRNA molecules trapped in stalled 50S ribosomal subunits, and thus maintains levels of free tRNAs and 50S ribosomes. The polypeptide is Peptidyl-tRNA hydrolase (Chromohalobacter salexigens (strain ATCC BAA-138 / DSM 3043 / CIP 106854 / NCIMB 13768 / 1H11)).